We begin with the raw amino-acid sequence, 383 residues long: UDP-N-acetylenolpyruvoylglucosamine reductase (383 aa).

Over residues 1–13 (MRTRRDVPADRSG) the composition is skewed to basic and acidic residues. Residues 1–26 (MRTRRDVPADRSGRSRVSRHPGLSVP) form a disordered region. The FAD-binding PCMH-type domain occupies 49–215 (LGGPATRLLT…LRVRFELENA (167 aa)). R192 is an active-site residue. The active-site Proton donor is S271. E375 is an active-site residue.

It belongs to the MurB family. It depends on FAD as a cofactor.

It is found in the cytoplasm. It catalyses the reaction UDP-N-acetyl-alpha-D-muramate + NADP(+) = UDP-N-acetyl-3-O-(1-carboxyvinyl)-alpha-D-glucosamine + NADPH + H(+). It functions in the pathway cell wall biogenesis; peptidoglycan biosynthesis. Cell wall formation. This chain is UDP-N-acetylenolpyruvoylglucosamine reductase, found in Streptomyces coelicolor (strain ATCC BAA-471 / A3(2) / M145).